The primary structure comprises 261 residues: TM2 domain-containing protein 3 (261 aa).

The N-terminal stretch at 1–44 (MEAAAEPLRSVRHLSRVLLFLSQCYILSGDGSLNLEHSQPLAQA) is a signal peptide. The Extracellular segment spans residues 45–193 (IKDPGPTRTF…RTFPKLLYCN (149 aa)). N-linked (GlcNAc...) asparagine glycosylation is found at Asn101, Asn136, Asn154, Asn171, Asn183, and Asn193. Residues 194–214 (WTGGYKWSTALALSITLGGFG) traverse the membrane as a helical segment. The region spanning 197-244 (GYKWSTALALSITLGGFGADRFYLGQWREGLGKLFSFGGLGIWTLIDV) is the TM2 domain. Over 215–229 (ADRFYLGQWREGLGK) the chain is Cytoplasmic. Residues 230–250 (LFSFGGLGIWTLIDVLLIGVG) traverse the membrane as a helical segment. The Extracellular segment spans residues 251–261 (YVGPADGSLYI).

This sequence belongs to the TM2 family.

It localises to the membrane. This chain is TM2 domain-containing protein 3 (Tm2d3), found in Mus musculus (Mouse).